The following is a 199-amino-acid chain: DnaJ homolog subfamily C member 5B (199 aa).

Residues serine 14 and serine 16 each carry the phosphoserine modification. The J domain occupies 19–84 (ALYEILGLHK…SKRNIYDKYG (66 aa)).

In terms of assembly, interacts with the chaperone complex consisting of HSC70 and SGTA. In terms of processing, palmitoylated.

The protein localises to the membrane. The polypeptide is DnaJ homolog subfamily C member 5B (DNAJC5B) (Bos taurus (Bovine)).